The sequence spans 426 residues: UDP-N-acetylmuramoylalanine--D-glutamate ligase (426 aa).

112 to 118 contributes to the ATP binding site; that stretch reads GSVGKST.

It belongs to the MurCDEF family.

The protein resides in the cytoplasm. The catalysed reaction is UDP-N-acetyl-alpha-D-muramoyl-L-alanine + D-glutamate + ATP = UDP-N-acetyl-alpha-D-muramoyl-L-alanyl-D-glutamate + ADP + phosphate + H(+). It functions in the pathway cell wall biogenesis; peptidoglycan biosynthesis. Cell wall formation. Catalyzes the addition of glutamate to the nucleotide precursor UDP-N-acetylmuramoyl-L-alanine (UMA). The sequence is that of UDP-N-acetylmuramoylalanine--D-glutamate ligase from Thermosipho melanesiensis (strain DSM 12029 / CIP 104789 / BI429).